The chain runs to 32 residues: Cyclotide glopa B (32 aa).

The segment at residues 1-32 (GGSVPCIETCVWTGCFLVPGCSCKSDKKCYLN) is a cross-link (cyclopeptide (Gly-Asn)). 3 disulfide bridges follow: C6–C21, C10–C23, and C15–C29.

Post-translationally, this is a cyclic peptide.

Its function is as follows. Probably participates in a plant defense mechanism. This Gloeospermum pauciflorum protein is Cyclotide glopa B.